Consider the following 185-residue polypeptide: Prorelaxin 1 (185 aa).

Positions 1-22 (MSSRFLLQLLGFWLLLSQPCRT) are cleaved as a signal peptide. 3 cysteine pairs are disulfide-bonded: cysteine 36-cysteine 171, cysteine 48-cysteine 185, and cysteine 170-cysteine 175. Positions 58–156 (SQEEPALLAR…LKYLQSDTHS (99 aa)) are cleaved as a propeptide — connecting peptide. A disordered region spans residues 135-161 (RLGEAEDGSPPGLKYLQSDTHSRKKRE).

Belongs to the insulin family. Heterodimer of a B chain and an A chain linked by two disulfide bonds.

The protein resides in the secreted. Its function is as follows. Relaxin is an ovarian hormone that acts with estrogen to produce dilatation of the birth canal in many mammals. This Mus musculus (Mouse) protein is Prorelaxin 1 (Rln1).